The primary structure comprises 604 residues: Sulfite reductase [NADPH] flavoprotein alpha-component (604 aa).

Positions 65–203 (VTILYGSQTG…AAGQWHADVL (139 aa)) constitute a Flavodoxin-like domain. Residues 71–76 (SQTGNG), 118–121 (STHG), and 154–163 (LGDSSYEFFC) each bind FMN. The FAD-binding FR-type domain occupies 236-453 (QNPYSAEVLV…VEPNKHFRLP (218 aa)). Residues T324, L358, 392–395 (RLYS), 410–412 (TVA), and 425–428 (GGAS) contribute to the FAD site. NADP(+)-binding positions include 524–525 (SR), 530–534 (KIYVQ), and D566. Residue Y604 coordinates FAD.

It belongs to the NADPH-dependent sulphite reductase flavoprotein subunit CysJ family. In the N-terminal section; belongs to the flavodoxin family. This sequence in the C-terminal section; belongs to the flavoprotein pyridine nucleotide cytochrome reductase family. As to quaternary structure, alpha(8)-beta(8). The alpha component is a flavoprotein, the beta component is a hemoprotein. FAD is required as a cofactor. It depends on FMN as a cofactor.

It carries out the reaction hydrogen sulfide + 3 NADP(+) + 3 H2O = sulfite + 3 NADPH + 4 H(+). It functions in the pathway sulfur metabolism; hydrogen sulfide biosynthesis; hydrogen sulfide from sulfite (NADPH route): step 1/1. Functionally, component of the sulfite reductase complex that catalyzes the 6-electron reduction of sulfite to sulfide. This is one of several activities required for the biosynthesis of L-cysteine from sulfate. The flavoprotein component catalyzes the electron flow from NADPH -&gt; FAD -&gt; FMN to the hemoprotein component. In Shewanella sp. (strain MR-7), this protein is Sulfite reductase [NADPH] flavoprotein alpha-component.